The sequence spans 292 residues: Large ribosomal subunit protein bL19m (292 aa).

Residues 40 to 61 (PVRQQSTGPSEPGAFQPPPKPV) form a disordered region. Ser77 is modified (phosphoserine).

The protein belongs to the bacterial ribosomal protein bL19 family. In terms of assembly, component of the mitochondrial ribosome large subunit (39S) which comprises a 16S rRNA and about 50 distinct proteins.

The protein localises to the mitochondrion. The polypeptide is Large ribosomal subunit protein bL19m (MRPL19) (Pongo abelii (Sumatran orangutan)).